Here is a 745-residue protein sequence, read N- to C-terminus: 1,4-alpha-glucan branching enzyme GlgB (745 aa).

Residue D416 is the Nucleophile of the active site. Residue E469 is the Proton donor of the active site.

It belongs to the glycosyl hydrolase 13 family. GlgB subfamily. In terms of assembly, monomer.

The catalysed reaction is Transfers a segment of a (1-&gt;4)-alpha-D-glucan chain to a primary hydroxy group in a similar glucan chain.. It participates in glycan biosynthesis; glycogen biosynthesis. In terms of biological role, catalyzes the formation of the alpha-1,6-glucosidic linkages in glycogen by scission of a 1,4-alpha-linked oligosaccharide from growing alpha-1,4-glucan chains and the subsequent attachment of the oligosaccharide to the alpha-1,6 position. This Shewanella sp. (strain MR-7) protein is 1,4-alpha-glucan branching enzyme GlgB.